We begin with the raw amino-acid sequence, 251 residues long: Cold shock-induced protein TIR2 (251 aa).

The first 18 residues, methionine 1–alanine 18, serve as a signal peptide directing secretion. Residues alanine 207–serine 225 form a PIR1/2/3 repeat. A lipid anchor (GPI-anchor amidated glycine) is attached at glycine 231. Residues alanine 232–leucine 251 constitute a propeptide, removed in mature form.

The protein belongs to the SRP1/TIP1 family. In terms of processing, the GPI-anchor is attached to the protein in the endoplasmic reticulum and serves to target the protein to the cell surface. There, the glucosamine-inositol phospholipid moiety is cleaved off and the GPI-modified mannoprotein is covalently attached via its lipidless GPI glycan remnant to the 1,6-beta-glucan of the outer cell wall layer. Post-translationally, covalently linked to beta-1,3-glucan of the inner cell wall layer via an alkali-sensitive ester linkage between the gamma-carboxyl group of glutamic acids, arising from a specific glutamine within the PIR1/2/3 repeat, and hydroxyl groups of glucoses of beta-1,3-glucan chains.

It localises to the secreted. It is found in the cell wall. The protein localises to the membrane. Functionally, component of the cell wall. In Saccharomyces cerevisiae (strain ATCC 204508 / S288c) (Baker's yeast), this protein is Cold shock-induced protein TIR2 (TIR2).